A 126-amino-acid chain; its full sequence is Small ribosomal subunit protein uS12m (126 aa).

Over residues 1–11 (MATSNQMGANT) the composition is skewed to polar residues. Residues 1-21 (MATSNQMGANTRSKKKKKNLK) form a disordered region. The segment covering 12–21 (RSKKKKKNLK) has biased composition (basic residues).

Belongs to the universal ribosomal protein uS12 family.

Its subcellular location is the mitochondrion. Protein S12 is involved in the translation initiation step. In Bigelowiella natans (Pedinomonas minutissima), this protein is Small ribosomal subunit protein uS12m (RPS12).